The sequence spans 95 residues: Pancreatic polypeptide prohormone (95 aa).

The first 29 residues, 1 to 29 (MAAARLCLSLLLLSTCVALLLQPLLGAQG), serve as a signal peptide directing secretion. Tyr-65 is modified (tyrosine amide). Positions 89–95 (ELSPLDL) are excised as a propeptide.

The protein belongs to the NPY family.

Its subcellular location is the secreted. In terms of biological role, hormone secreted by pancreatic cells that acts as a regulator of pancreatic and gastrointestinal functions probably by signaling through the G protein-coupled receptor NPY4R2. In Homo sapiens (Human), this protein is Pancreatic polypeptide prohormone.